We begin with the raw amino-acid sequence, 337 residues long: Phenylalanine--tRNA ligase alpha subunit (337 aa).

Residue Glu252 coordinates Mg(2+).

It belongs to the class-II aminoacyl-tRNA synthetase family. Phe-tRNA synthetase alpha subunit type 1 subfamily. In terms of assembly, tetramer of two alpha and two beta subunits. The cofactor is Mg(2+).

The protein localises to the cytoplasm. The enzyme catalyses tRNA(Phe) + L-phenylalanine + ATP = L-phenylalanyl-tRNA(Phe) + AMP + diphosphate + H(+). This is Phenylalanine--tRNA ligase alpha subunit from Francisella tularensis subsp. tularensis (strain SCHU S4 / Schu 4).